Reading from the N-terminus, the 845-residue chain is uncharacterized protein (845 aa).

Residues 224–241 (SNNIPTGIQDSSKYTVNG) are compositionally biased toward polar residues. 7 disordered regions span residues 224 to 244 (SNNI…GPTE), 324 to 346 (QGTE…ANNG), 383 to 434 (RTAN…EGSA), 456 to 485 (VKAS…ATLN), 519 to 619 (NMTL…PKNS), 674 to 701 (VVSR…DSSP), and 739 to 785 (RKST…ANKS). Over residues 390–399 (PTKKSNRSEQ) the composition is skewed to basic and acidic residues. Residues 400–422 (SKTVANTNVGSKNGTTPRSFAQK) show a composition bias toward polar residues. Residues 534 to 546 (NSWRSKYLSEGKN) show a composition bias toward basic and acidic residues. Low complexity predominate over residues 563 to 576 (SSLASPTKSSASPL). Serine 567 carries the phosphoserine modification. Basic and acidic residues-rich tracts occupy residues 579-588 (APKETPERLC) and 600-614 (ANLK…KSDI). Composition is skewed to polar residues over residues 674–683 (VVSRTVTSPK), 691–701 (SKASYNQDSSP), and 743–760 (ADSL…TPKA).

It is found in the mitochondrion. This is an uncharacterized protein from Schizosaccharomyces pombe (strain 972 / ATCC 24843) (Fission yeast).